The sequence spans 208 residues: Uracil phosphoribosyltransferase (208 aa).

Residues Arg78, Arg103, and Asp130–Thr138 each bind 5-phospho-alpha-D-ribose 1-diphosphate. Uracil contacts are provided by residues Ile193 and Gly198–Ala200. Asp199 contacts 5-phospho-alpha-D-ribose 1-diphosphate.

This sequence belongs to the UPRTase family. Requires Mg(2+) as cofactor.

The enzyme catalyses UMP + diphosphate = 5-phospho-alpha-D-ribose 1-diphosphate + uracil. It functions in the pathway pyrimidine metabolism; UMP biosynthesis via salvage pathway; UMP from uracil: step 1/1. With respect to regulation, allosterically activated by GTP. Its function is as follows. Catalyzes the conversion of uracil and 5-phospho-alpha-D-ribose 1-diphosphate (PRPP) to UMP and diphosphate. In Campylobacter curvus (strain 525.92), this protein is Uracil phosphoribosyltransferase.